Here is a 209-residue protein sequence, read N- to C-terminus: Uracil phosphoribosyltransferase (209 aa).

5-phospho-alpha-D-ribose 1-diphosphate-binding positions include Arg-79, Arg-104, and 131 to 139 (DPMLATGGS). Uracil contacts are provided by residues Ile-194 and 199–201 (GDA). Asp-200 serves as a coordination point for 5-phospho-alpha-D-ribose 1-diphosphate.

The protein belongs to the UPRTase family. It depends on Mg(2+) as a cofactor.

It carries out the reaction UMP + diphosphate = 5-phospho-alpha-D-ribose 1-diphosphate + uracil. Its pathway is pyrimidine metabolism; UMP biosynthesis via salvage pathway; UMP from uracil: step 1/1. Allosterically activated by GTP. Functionally, catalyzes the conversion of uracil and 5-phospho-alpha-D-ribose 1-diphosphate (PRPP) to UMP and diphosphate. The polypeptide is Uracil phosphoribosyltransferase (Listeria innocua serovar 6a (strain ATCC BAA-680 / CLIP 11262)).